A 590-amino-acid chain; its full sequence is FAD-linked oxidoreductase malF (590 aa).

Residues 1-18 (MKYTATFALLILAIGIQT) form the signal peptide. N-linked (GlcNAc...) asparagine glycosylation is found at Asn-44, Asn-80, Asn-103, Asn-178, and Asn-396. Residues 117–303 (AQGRIPLYSA…TSVTLRAFAD (187 aa)) enclose the FAD-binding PCMH-type domain.

The protein belongs to the oxygen-dependent FAD-linked oxidoreductase family. FAD serves as cofactor.

Functionally, FAD-linked oxidoreductase; part of the gene cluster that mediates the biosynthesis of malbrancheamide, a dichlorinated fungal indole alkaloid that belongs to a family of natural products containing a characteristic bicyclo[2.2.2]diazaoctane core. The first step of malbrancheamide biosynthesis involves coupling of L-proline and L-tryptophan by malG, a bimodular NRPS, to produce L-Pro-L-Trp aldehyde through reductive offloading. This compound undergoes spontaneous cyclization and dehydration to give a dienamine which is reverse prenylated at C-2 by malE. The other prenyltransferase present in the cluster, malB, displays modest activity, suggesting that may be a redundant gene in the pathway. Subsequently, a [4+2] Diels-Alder cyclo-addition catalyzed by the bifunctional enzyme malC forms the characteristic bicyclo[2.2.2]diazaoctane ring of premalbrancheamid. Finally, the flavin-dependent halogenase malA catalyzes the iterative dichlorination of the indole ring of premalbrancheamide to yield C-9 monochlorinated malbrancheamide B, C-8 monochlorinated isomalbrancheamide B, and dichlorinated malbrancheamide. MalA is also able to brominate premalbrancheamide at C-9 to yield malbrancheamide C, and, to a lesser extend, at C-8 to yield isomalbrancheamide C. Finally, malA can brominate C-9 monochlorinated malbrancheamide B at C-8 to yield malbrancheamide D, or C-8 monochlorinated isomalbrancheamide B at C-9 to produce isomalbrancheamide D. The polypeptide is FAD-linked oxidoreductase malF (Malbranchea aurantiaca).